The primary structure comprises 599 residues: DNA primase (599 aa).

The CHC2-type zinc finger occupies 40 to 64 (CPFHGENTPSFSVSPDKQLYHCFGC). Positions 259 to 342 (NEAVLFEGYV…KVAMIPDGLD (84 aa)) constitute a Toprim domain. E265, D309, and D311 together coordinate Mg(2+).

Belongs to the DnaG primase family. As to quaternary structure, monomer. Interacts with DnaB. The cofactor is Zn(2+). Mg(2+) serves as cofactor.

It catalyses the reaction ssDNA + n NTP = ssDNA/pppN(pN)n-1 hybrid + (n-1) diphosphate.. Functionally, RNA polymerase that catalyzes the synthesis of short RNA molecules used as primers for DNA polymerase during DNA replication. The polypeptide is DNA primase (Halalkalibacterium halodurans (strain ATCC BAA-125 / DSM 18197 / FERM 7344 / JCM 9153 / C-125) (Bacillus halodurans)).